A 244-amino-acid chain; its full sequence is L-xylulose reductase (244 aa).

Met1 bears the N-acetylmethionine mark. Residue 11 to 39 participates in NADP(+) binding; the sequence is LVTGAGKGIGRSTVLALQAAGAHVVAVSR. Arg21 carries the omega-N-methylarginine modification. Residue Ser46 is modified to Phosphoserine. Ser136 contacts substrate. Tyr149 acts as the Proton acceptor in catalysis. The active site involves Lys153.

The protein belongs to the short-chain dehydrogenases/reductases (SDR) family. In terms of assembly, homotetramer. As to expression, highly expressed in kidney and liver. Expressed in epididymis. Weakly expressed in brain, heart, lung, spleen and testis.

It localises to the membrane. Its subcellular location is the cytoplasmic vesicle. The protein resides in the secretory vesicle. It is found in the acrosome. The catalysed reaction is xylitol + NADP(+) = L-xylulose + NADPH + H(+). Its function is as follows. Catalyzes the NADPH-dependent reduction of several pentoses, tetroses, trioses, alpha-dicarbonyl compounds and L-xylulose. Participates in the uronate cycle of glucose metabolism. May play a role in the water absorption and cellular osmoregulation in the proximal renal tubules by producing xylitol, an osmolyte, thereby preventing osmolytic stress from occurring in the renal tubules. The chain is L-xylulose reductase (DCXR) from Mesocricetus auratus (Golden hamster).